The primary structure comprises 443 residues: GTPase Der (443 aa).

2 consecutive EngA-type G domains span residues Pro3–Lys167 and Ile176–Gln349. GTP-binding positions include Gly9–Ser16, Asp56–Leu60, Asn119–Asp122, Gly182–Ser189, Asp229–Ile233, and Asn294–Asp297. A KH-like domain is found at Gln350–Pro434.

Belongs to the TRAFAC class TrmE-Era-EngA-EngB-Septin-like GTPase superfamily. EngA (Der) GTPase family. In terms of assembly, associates with the 50S ribosomal subunit.

Functionally, GTPase that plays an essential role in the late steps of ribosome biogenesis. The sequence is that of GTPase Der from Coxiella burnetii (strain CbuG_Q212) (Coxiella burnetii (strain Q212)).